Reading from the N-terminus, the 504-residue chain is UDP-GalNAc:beta-1,3-N-acetylgalactosaminyltransferase 2 (504 aa).

Over 1–3 the chain is Cytoplasmic; sequence MRN. The chain crosses the membrane as a helical; Signal-anchor for type II membrane protein span at residues 4-24; the sequence is WLVLLCPCVLGAALHLWHLWL. At 25 to 504 the chain is on the lumenal side; sequence RSPPDPHNTG…DPCQCEAKVR (480 aa). N-linked (GlcNAc...) asparagine glycans are attached at residues asparagine 117 and asparagine 176.

This sequence belongs to the glycosyltransferase 31 family. In terms of processing, N-glycosylated. As to expression, present in testis (at protein level). In testis, it is mainly detected in the middle layers of seminiferous tubules at stages XII to II. Strongly expressed in primary and secondary spermatocytes and early round spermatids, but not in spermatogonia, elongating or elongated spermatids, or in Leydig or Sertoli cells.

It localises to the golgi apparatus membrane. It is found in the endoplasmic reticulum. The catalysed reaction is 3-O-(N-acetyl-beta-D-glucosaminyl-(1-&gt;4)-alpha-D-mannosyl)-L-threonyl-[protein] + UDP-N-acetyl-alpha-D-galactosamine = 3-O-[beta-D-GalNAc-(1-&gt;3)-beta-D-GlcNAc-(1-&gt;4)-alpha-D-Man]-L-Thr-[protein] + UDP + H(+). It participates in protein modification; protein glycosylation. Its function is as follows. Beta-1,3-N-acetylgalactosaminyltransferase that synthesizes a unique carbohydrate structure, GalNAc-beta-1-3GlcNAc, on N- and O-glycans. Has no galactose nor galactosaminyl transferase activity toward any acceptor substrate. Involved in alpha-dystroglycan (DAG1) glycosylation: acts coordinately with GTDC2/POMGnT2 to synthesize a GalNAc-beta3-GlcNAc-beta-terminus at the 4-position of protein O-mannose in the biosynthesis of the phosphorylated O-mannosyl trisaccharide (N-acetylgalactosamine-beta-3-N-acetylglucosamine-beta-4-(phosphate-6-)mannose), a carbohydrate structure present in alpha-dystroglycan, which is required for binding laminin G-like domain-containing extracellular proteins with high affinity. The polypeptide is UDP-GalNAc:beta-1,3-N-acetylgalactosaminyltransferase 2 (B3galnt2) (Mus musculus (Mouse)).